The chain runs to 296 residues: Protoheme IX farnesyltransferase (296 aa).

9 helical membrane-spanning segments follow: residues 29 to 49 (LSGL…GHVA), 54 to 74 (ALTV…NCWM), 98 to 118 (FTAL…LALV), 121 to 141 (PLTA…YTPM), 147 to 167 (LALL…WTAA), 175 to 195 (GLAL…AVSI), 221 to 241 (WIAA…PLRV), 246 to 266 (YGAV…AGVG), and 275 to 295 (NFFL…FLGA).

This sequence belongs to the UbiA prenyltransferase family. Protoheme IX farnesyltransferase subfamily.

It localises to the cell inner membrane. It catalyses the reaction heme b + (2E,6E)-farnesyl diphosphate + H2O = Fe(II)-heme o + diphosphate. It functions in the pathway porphyrin-containing compound metabolism; heme O biosynthesis; heme O from protoheme: step 1/1. Its function is as follows. Converts heme B (protoheme IX) to heme O by substitution of the vinyl group on carbon 2 of heme B porphyrin ring with a hydroxyethyl farnesyl side group. The sequence is that of Protoheme IX farnesyltransferase from Anaeromyxobacter sp. (strain Fw109-5).